We begin with the raw amino-acid sequence, 521 residues long: Glucose-1-phosphate adenylyltransferase large subunit 2, chloroplastic/amyloplastic (521 aa).

The transit peptide at 1-47 (MQFSSVLPLEGKACMSPVRRGSGGYGSERMRINCCSIRRNKALRRMC) directs the protein to the chloroplast.

This sequence belongs to the bacterial/plant glucose-1-phosphate adenylyltransferase family. As to quaternary structure, heterotetramer. Abundant in the embryo and is also present in the endosperm.

It localises to the plastid. The protein resides in the chloroplast. It is found in the amyloplast. It catalyses the reaction alpha-D-glucose 1-phosphate + ATP + H(+) = ADP-alpha-D-glucose + diphosphate. The protein operates within glycan biosynthesis; starch biosynthesis. Activated by 3'phosphoglycerate, inhibited by orthophosphate. Allosteric regulation. In terms of biological role, this protein plays a role in synthesis of starch. It catalyzes the synthesis of the activated glycosyl donor, ADP-glucose from Glc-1-P and ATP. This is Glucose-1-phosphate adenylyltransferase large subunit 2, chloroplastic/amyloplastic (AGP2) from Zea mays (Maize).